A 533-amino-acid chain; its full sequence is Na(+)/H(+) antiporter NhaB (533 aa).

The next 11 membrane-spanning stretches (helical) occupy residues isoleucine 10–isoleucine 30, proline 67–leucine 87, leucine 98–phenylalanine 118, valine 131–isoleucine 165, leucine 209–proline 229, isoleucine 247–valine 267, alanine 310–isoleucine 330, glutamate 355–isoleucine 375, leucine 396–glycine 416, alanine 454–isoleucine 474, and methionine 481–glutamine 501.

It belongs to the NhaB Na(+)/H(+) (TC 2.A.34) antiporter family.

It localises to the cell inner membrane. The catalysed reaction is 2 Na(+)(in) + 3 H(+)(out) = 2 Na(+)(out) + 3 H(+)(in). In terms of biological role, na(+)/H(+) antiporter that extrudes sodium in exchange for external protons. This Shewanella sp. (strain ANA-3) protein is Na(+)/H(+) antiporter NhaB.